The sequence spans 213 residues: Phosphatidylserine decarboxylase proenzyme (213 aa).

S182 (schiff-base intermediate with substrate; via pyruvic acid) is an active-site residue. S182 carries the post-translational modification Pyruvic acid (Ser); by autocatalysis.

It belongs to the phosphatidylserine decarboxylase family. PSD-A subfamily. As to quaternary structure, heterodimer of a large membrane-associated beta subunit and a small pyruvoyl-containing alpha subunit. Pyruvate serves as cofactor. Is synthesized initially as an inactive proenzyme. Formation of the active enzyme involves a self-maturation process in which the active site pyruvoyl group is generated from an internal serine residue via an autocatalytic post-translational modification. Two non-identical subunits are generated from the proenzyme in this reaction, and the pyruvate is formed at the N-terminus of the alpha chain, which is derived from the carboxyl end of the proenzyme. The post-translation cleavage follows an unusual pathway, termed non-hydrolytic serinolysis, in which the side chain hydroxyl group of the serine supplies its oxygen atom to form the C-terminus of the beta chain, while the remainder of the serine residue undergoes an oxidative deamination to produce ammonia and the pyruvoyl prosthetic group on the alpha chain.

The protein resides in the cell membrane. The enzyme catalyses a 1,2-diacyl-sn-glycero-3-phospho-L-serine + H(+) = a 1,2-diacyl-sn-glycero-3-phosphoethanolamine + CO2. It functions in the pathway phospholipid metabolism; phosphatidylethanolamine biosynthesis; phosphatidylethanolamine from CDP-diacylglycerol: step 2/2. Catalyzes the formation of phosphatidylethanolamine (PtdEtn) from phosphatidylserine (PtdSer). The polypeptide is Phosphatidylserine decarboxylase proenzyme (Chlorobium phaeobacteroides (strain BS1)).